Reading from the N-terminus, the 1040-residue chain is DNA mismatch repair protein MutS (1040 aa).

Residues 1-10 show a composition bias toward polar residues; it reads MPVKPSAQNN. 2 disordered regions span residues 1–22 and 130–157; these read MPVK…SVPV and ATGT…SKST. A compositionally biased stretch (low complexity) spans 11-22; that stretch reads SPSKPTSKSVPV. The segment covering 130–143 has biased composition (polar residues); sequence ATGTDNANNPSNAP. 759 to 766 lines the ATP pocket; that stretch reads GPNMGGKS.

This sequence belongs to the DNA mismatch repair MutS family.

Its function is as follows. This protein is involved in the repair of mismatches in DNA. It is possible that it carries out the mismatch recognition step. This protein has a weak ATPase activity. This chain is DNA mismatch repair protein MutS, found in Psychrobacter cryohalolentis (strain ATCC BAA-1226 / DSM 17306 / VKM B-2378 / K5).